The following is a 438-amino-acid chain: Aspartate--tRNA(Asp/Asn) ligase (438 aa).

Glutamate 176 serves as a coordination point for L-aspartate. Residues 198 to 201 (QLYK) form an aspartate region. Residue arginine 220 participates in L-aspartate binding. Residues 220 to 222 (RAE), 228 to 230 (RHL), and glutamate 361 each bind ATP. Residues glutamate 361 and serine 364 each coordinate Mg(2+). The L-aspartate site is built by serine 364 and arginine 368. 409–412 (GADR) provides a ligand contact to ATP.

Belongs to the class-II aminoacyl-tRNA synthetase family. Type 2 subfamily. Homodimer. The cofactor is Mg(2+).

The protein localises to the cytoplasm. It catalyses the reaction tRNA(Asx) + L-aspartate + ATP = L-aspartyl-tRNA(Asx) + AMP + diphosphate. Functionally, aspartyl-tRNA synthetase with relaxed tRNA specificity since it is able to aspartylate not only its cognate tRNA(Asp) but also tRNA(Asn). Reaction proceeds in two steps: L-aspartate is first activated by ATP to form Asp-AMP and then transferred to the acceptor end of tRNA(Asp/Asn). This chain is Aspartate--tRNA(Asp/Asn) ligase, found in Methanococcus maripaludis (strain C7 / ATCC BAA-1331).